Consider the following 530-residue polypeptide: Hyccin 2 (530 aa).

Phosphothreonine is present on residues threonine 30 and threonine 306. Residues serine 321 and serine 341 each carry the phosphoserine modification. The interval 328–410 (RREGAEGVNG…DSVVRKQYVQ (83 aa)) is disordered. Positions 353–373 (SGASLSSQPIGTKPSSSSQRG) are enriched in polar residues. Serine 430, serine 442, serine 444, and serine 491 each carry phosphoserine. The segment at 498 to 530 (GQAGEGKELLSPGAPLTKQSRSPSFNMQLISQV) is disordered. Polar residues predominate over residues 514-530 (TKQSRSPSFNMQLISQV).

The protein belongs to the Hyccin family. In terms of assembly, component of a phosphatidylinositol 4-kinase (PI4K) complex, composed of PI4KA, EFR3 (EFR3A or EFR3B), TTC7 (TTC7A or TTC7B) and HYCC (HYCC1 or HYCC2).

The protein localises to the cytoplasm. It is found in the cytosol. The protein resides in the cell membrane. In terms of biological role, component of a complex required to localize phosphatidylinositol 4-kinase (PI4K) to the plasma membrane. The protein is Hyccin 2 (HYCC2) of Pongo abelii (Sumatran orangutan).